Reading from the N-terminus, the 257-residue chain is uncharacterized protein (257 aa).

Catalysis depends on charge relay system residues Ser-122 and His-236.

Belongs to the peptidase S9B family.

This is an uncharacterized protein from Bacillus subtilis (strain 168).